We begin with the raw amino-acid sequence, 498 residues long: Cytochrome P450 71B5 (498 aa).

A helical transmembrane segment spans residues 3-23 (IFLCFLLLLPLSLIFLKKLLP). C439 is a heme binding site.

The protein belongs to the cytochrome P450 family. It depends on heme as a cofactor.

It localises to the membrane. This chain is Cytochrome P450 71B5 (CYP71B5), found in Arabidopsis thaliana (Mouse-ear cress).